The primary structure comprises 120 residues: MFLLYEYDIFWAFLIISIFIPILAFTISGFLAPINKGPEKLSSYESGIEPMGDAWLQFQIRYYMFALVFVVFDVETVFLYPWAMSFDVLGISVFIEALIFVLILIVGSVYAWRKGALEWS.

The next 3 membrane-spanning stretches (helical) occupy residues 9–29 (IFWA…TISG), 64–84 (MFAL…PWAM), and 88–108 (VLGI…IVGS).

It belongs to the complex I subunit 3 family. As to quaternary structure, NDH is composed of at least 16 different subunits, 5 of which are encoded in the nucleus.

It is found in the plastid. The protein resides in the chloroplast thylakoid membrane. The enzyme catalyses a plastoquinone + NADH + (n+1) H(+)(in) = a plastoquinol + NAD(+) + n H(+)(out). The catalysed reaction is a plastoquinone + NADPH + (n+1) H(+)(in) = a plastoquinol + NADP(+) + n H(+)(out). NDH shuttles electrons from NAD(P)H:plastoquinone, via FMN and iron-sulfur (Fe-S) centers, to quinones in the photosynthetic chain and possibly in a chloroplast respiratory chain. The immediate electron acceptor for the enzyme in this species is believed to be plastoquinone. Couples the redox reaction to proton translocation, and thus conserves the redox energy in a proton gradient. This is NAD(P)H-quinone oxidoreductase subunit 3, chloroplastic from Lotus japonicus (Lotus corniculatus var. japonicus).